The primary structure comprises 137 residues: Profilin-3 (137 aa).

This sequence belongs to the profilin family. Interacts with ACTRT3. Detected in round spermatids.

The protein resides in the cytoplasm. Its subcellular location is the cytoskeleton. It is found in the nucleus. Its function is as follows. Binds to actin and affects the structure of the cytoskeleton. Slightly reduces actin polymerization. Binds to poly-L-proline, phosphatidylinositol 3-phosphate (PtdIns(3)P), phosphatidylinositol 4,5-bisphosphate (PtdIns(4,5)P2), and phosphatidylinositol 4-phosphate (PtdIns(4)P). May be involved in spermatogenesis. The protein is Profilin-3 (Pfn3) of Rattus norvegicus (Rat).